A 325-amino-acid chain; its full sequence is GMP reductase (325 aa).

Residue Cys-173 is the Thioimidate intermediate of the active site. 202–225 (IIADGGIRSHGDIAKSIRFGATMV) contacts NADP(+).

Belongs to the IMPDH/GMPR family. GuaC type 2 subfamily.

The catalysed reaction is IMP + NH4(+) + NADP(+) = GMP + NADPH + 2 H(+). In terms of biological role, catalyzes the irreversible NADPH-dependent deamination of GMP to IMP. It functions in the conversion of nucleobase, nucleoside and nucleotide derivatives of G to A nucleotides, and in maintaining the intracellular balance of A and G nucleotides. The chain is GMP reductase from Paracidovorax citrulli (strain AAC00-1) (Acidovorax citrulli).